Reading from the N-terminus, the 215-residue chain is uncharacterized protein (215 aa).

It belongs to the thiaminase-2 family.

This is an uncharacterized protein from Haemophilus influenzae (strain ATCC 51907 / DSM 11121 / KW20 / Rd).